The sequence spans 352 residues: MKIAVLPGDGIGPEVTREAVRVIEALGLGDIEMKEAPVGGAAYKAYGHPLPPETLEIARLSDGILFGAVGDPDCDSLERHLRPEQAILGLRKALTLFANLRPARVFKGMEDFSALRPEVAGAIDLLIVRELNGDVYFGEKGFRTAANGDREGYDVMSYSESEVRRIAHVAFRAAMGRKKRLCSVDKANVLETSQLWRDVMLEVAKDYPEVALEHMYVDNAAMQLVRAPGNFDVVVTGNLFGDILSDQASMCVGSIGLLASASLGERETEYGTFGLYEPIHGSAPDIAGKGLANPMATILSAAMLLRHSLGLEVAADRIEAAVAKALADGVLGRDLGGTAGTTEIGDAVLARL.

Substrate-binding residues include arginine 91, arginine 101, arginine 129, and aspartate 218. Residues aspartate 218, aspartate 242, and aspartate 246 each coordinate Mg(2+). 281–293 (GSAPDIAGKGLAN) is a binding site for NAD(+).

It belongs to the isocitrate and isopropylmalate dehydrogenases family. LeuB type 1 subfamily. In terms of assembly, homodimer. Mg(2+) is required as a cofactor. The cofactor is Mn(2+).

It is found in the cytoplasm. It carries out the reaction (2R,3S)-3-isopropylmalate + NAD(+) = 4-methyl-2-oxopentanoate + CO2 + NADH. It participates in amino-acid biosynthesis; L-leucine biosynthesis; L-leucine from 3-methyl-2-oxobutanoate: step 3/4. Its function is as follows. Catalyzes the oxidation of 3-carboxy-2-hydroxy-4-methylpentanoate (3-isopropylmalate) to 3-carboxy-4-methyl-2-oxopentanoate. The product decarboxylates to 4-methyl-2 oxopentanoate. The chain is 3-isopropylmalate dehydrogenase from Novosphingobium aromaticivorans (strain ATCC 700278 / DSM 12444 / CCUG 56034 / CIP 105152 / NBRC 16084 / F199).